The following is a 332-amino-acid chain: Ribosomal RNA small subunit methyltransferase H (332 aa).

Residues 34–36 (GGH), Asp59, Phe86, Asp112, and Gln119 each bind S-adenosyl-L-methionine.

The protein belongs to the methyltransferase superfamily. RsmH family.

It localises to the cytoplasm. It carries out the reaction cytidine(1402) in 16S rRNA + S-adenosyl-L-methionine = N(4)-methylcytidine(1402) in 16S rRNA + S-adenosyl-L-homocysteine + H(+). Specifically methylates the N4 position of cytidine in position 1402 (C1402) of 16S rRNA. In Chlorobium phaeobacteroides (strain BS1), this protein is Ribosomal RNA small subunit methyltransferase H.